Here is a 339-residue protein sequence, read N- to C-terminus: Extracellular matrix protein-binding protein emp (339 aa).

A signal peptide spans 1 to 26; it reads MKKKLFVLTMSTLFATQLINSNHANA.

It localises to the cell surface. Adhesin that binds to the host cell extracellular matrix proteins fibronectin, fibrinogen, collagen, and vitronectin. The protein is Extracellular matrix protein-binding protein emp (emp) of Staphylococcus aureus (strain bovine RF122 / ET3-1).